Reading from the N-terminus, the 98-residue chain is Small ribosomal subunit protein bS20 (98 aa).

The interval 76–98 is disordered; it reads HPNNGARKKSRLASKLKPIEQTA.

It belongs to the bacterial ribosomal protein bS20 family.

In terms of biological role, binds directly to 16S ribosomal RNA. The protein is Small ribosomal subunit protein bS20 of Trichormus variabilis (strain ATCC 29413 / PCC 7937) (Anabaena variabilis).